The following is a 567-amino-acid chain: Phenylalanine ammonia-lyase (567 aa).

The active-site Proton donor/acceptor is the Tyr-78. Residues 167–169 constitute a cross-link (5-imidazolinone (Ala-Gly)); the sequence is ASG. Ser-168 bears the 2,3-didehydroalanine (Ser) mark. (E)-cinnamate is bound by residues Asn-223, Gln-311, Arg-317, Asn-347, Lys-419, Glu-448, and Asn-451.

It belongs to the PAL/histidase family. Homotetramer. Contains an active site 4-methylidene-imidazol-5-one (MIO), which is formed autocatalytically by cyclization and dehydration of residues Ala-Ser-Gly.

It localises to the cytoplasm. The enzyme catalyses L-phenylalanine = (E)-cinnamate + NH4(+). It participates in phenylpropanoid metabolism; trans-cinnamate biosynthesis; trans-cinnamate from L-phenylalanine: step 1/1. Functionally, catalyzes the non-oxidative deamination of L-phenylalanine to form trans-cinnamic acid, the first step in the phenylpropanoid pathway. The polypeptide is Phenylalanine ammonia-lyase (Trichormus variabilis (strain ATCC 29413 / PCC 7937) (Anabaena variabilis)).